We begin with the raw amino-acid sequence, 253 residues long: 3-deoxy-manno-octulosonate cytidylyltransferase (253 aa).

The protein belongs to the KdsB family.

The protein localises to the cytoplasm. It carries out the reaction 3-deoxy-alpha-D-manno-oct-2-ulosonate + CTP = CMP-3-deoxy-beta-D-manno-octulosonate + diphosphate. It participates in nucleotide-sugar biosynthesis; CMP-3-deoxy-D-manno-octulosonate biosynthesis; CMP-3-deoxy-D-manno-octulosonate from 3-deoxy-D-manno-octulosonate and CTP: step 1/1. The protein operates within bacterial outer membrane biogenesis; lipopolysaccharide biosynthesis. Its function is as follows. Activates KDO (a required 8-carbon sugar) for incorporation into bacterial lipopolysaccharide in Gram-negative bacteria. In Neisseria meningitidis serogroup B (strain ATCC BAA-335 / MC58), this protein is 3-deoxy-manno-octulosonate cytidylyltransferase.